The sequence spans 208 residues: MNYPNGKPFNRNKSQVGRTHKGQTSKIDYGGRGMSLEKDIELSNDYYLNRGIAVIHKKPTPIQIVNVHYPMRSKAVINEAYFRTPSTTDYNGIYHGRYLDFEAKETKNKTSFPLNNMHEHQVRHMEACYQQQGVVFLLIRFKSLDEVYLLPYANFKKFWERHIQEIKKSVTVEEIRKNGYYIPYQYQPRLNYLKTVDKLILDESEDRV.

The disordered stretch occupies residues 1–30; it reads MNYPNGKPFNRNKSQVGRTHKGQTSKIDYG. The Mg(2+) site is built by threonine 87, aspartate 89, glutamate 102, and glutamine 121.

This sequence belongs to the RecU family. Requires Mg(2+) as cofactor.

Its subcellular location is the cytoplasm. The catalysed reaction is Endonucleolytic cleavage at a junction such as a reciprocal single-stranded crossover between two homologous DNA duplexes (Holliday junction).. Endonuclease that resolves Holliday junction intermediates in genetic recombination. Cleaves mobile four-strand junctions by introducing symmetrical nicks in paired strands. Promotes annealing of linear ssDNA with homologous dsDNA. Required for DNA repair, homologous recombination and chromosome segregation. The protein is Holliday junction resolvase RecU of Staphylococcus saprophyticus subsp. saprophyticus (strain ATCC 15305 / DSM 20229 / NCIMB 8711 / NCTC 7292 / S-41).